We begin with the raw amino-acid sequence, 690 residues long: Glutaminase A (690 aa).

A signal peptide spans 1 to 20; it reads MMHFLSFCLSVASLVSYAGA. N-linked (GlcNAc...) asparagine glycans are attached at residues N80, N96, N435, N508, N528, N538, and N571.

The protein belongs to the fungal glutaminase gtaA family.

The protein localises to the secreted. The catalysed reaction is L-glutamine + H2O = L-glutamate + NH4(+). With respect to regulation, activity is inhibited by about 80% in the presence of 18% sodium chloride. Glutaminase catalyzes the hydrolysis of glutamine to glutamic acid and plays a key role in nitrogen metabolism. Catalyzes the hydrolysis not only of L-glutamine but also of D-glutamine. The polypeptide is Glutaminase A (Aspergillus oryzae (strain ATCC 42149 / RIB 40) (Yellow koji mold)).